The chain runs to 510 residues: NAD(P)H-quinone oxidoreductase subunit 2, chloroplastic (510 aa).

13 helical membrane-spanning segments follow: residues 24–44, 59–79, 99–119, 124–144, 149–169, 183–203, 229–249, 295–315, 323–343, 347–367, 395–415, 418–438, and 484–504; these read LLLF…GLIL, WFYF…LFRW, IFQF…VEYI, MAIT…MFLC, XITI…LSGY, YLLM…WLYG, ISIA…PAPF, WHLL…LIAI, MLAY…IVGD, GYAS…GTFA, ALSS…AGFF, LHLF…IGLL, and MTVC…ILAI.

It belongs to the complex I subunit 2 family. In terms of assembly, NDH is composed of at least 16 different subunits, 5 of which are encoded in the nucleus.

It localises to the plastid. The protein localises to the chloroplast thylakoid membrane. It catalyses the reaction a plastoquinone + NADH + (n+1) H(+)(in) = a plastoquinol + NAD(+) + n H(+)(out). It carries out the reaction a plastoquinone + NADPH + (n+1) H(+)(in) = a plastoquinol + NADP(+) + n H(+)(out). Functionally, NDH shuttles electrons from NAD(P)H:plastoquinone, via FMN and iron-sulfur (Fe-S) centers, to quinones in the photosynthetic chain and possibly in a chloroplast respiratory chain. The immediate electron acceptor for the enzyme in this species is believed to be plastoquinone. Couples the redox reaction to proton translocation, and thus conserves the redox energy in a proton gradient. The protein is NAD(P)H-quinone oxidoreductase subunit 2, chloroplastic of Narcissus elegans (Daffodil).